The following is a 437-amino-acid chain: Probable inactive DNA (cytosine-5)-methyltransferase DRM1B (437 aa).

2 consecutive UBA domains span residues 20-60 and 120-164; these read SAPS…LLQL and EMSE…IYAP. Residues 243 to 437 form the SAM-dependent MTase DRM-type domain; it reads VHRNLPDHAL…LIQLHTTSLC (195 aa).

Belongs to the class I-like SAM-binding methyltransferase superfamily. DRM-methyltransferase family.

The protein resides in the nucleus. Involved in de novo DNA methylation. Involved in RNA-directed DNA methylation (RdDM). This Oryza sativa subsp. japonica (Rice) protein is Probable inactive DNA (cytosine-5)-methyltransferase DRM1B.